Here is a 244-residue protein sequence, read N- to C-terminus: Small ribosomal subunit protein uS3 (244 aa).

The 69-residue stretch at 38–106 (IRKYLNARLA…EVQINIFEVK (69 aa)) folds into the KH type-2 domain. Over residues 222 to 235 (TGRRNDNAGGNRDK) the composition is skewed to basic and acidic residues. Positions 222–244 (TGRRNDNAGGNRDKNFKRKRANR) are disordered.

The protein belongs to the universal ribosomal protein uS3 family. As to quaternary structure, part of the 30S ribosomal subunit. Forms a tight complex with proteins S10 and S14.

In terms of biological role, binds the lower part of the 30S subunit head. Binds mRNA in the 70S ribosome, positioning it for translation. This is Small ribosomal subunit protein uS3 from Parabacteroides distasonis (strain ATCC 8503 / DSM 20701 / CIP 104284 / JCM 5825 / NCTC 11152).